A 469-amino-acid polypeptide reads, in one-letter code: SWI/SNF complex subunit SWI3B (469 aa).

The tract at residues 1–42 (MAMKAPDPGGSGEILPSTPSLSETTSGGAAAASKSAQLPSSS) is disordered. Over residues 15–42 (LPSTPSLSETTSGGAAAASKSAQLPSSS) the composition is skewed to low complexity. An SWIRM domain is found at 48-145 (IHVPSYSSWF…YNSSASAKPL (98 aa)). The SANT domain occupies 223-274 (ESKPEWSDKEILLLLEAVMHYGDDWKKVASHVIGRTEKDCVSQFVKLPFGEQ). 2 stretches are compositionally biased toward basic and acidic residues: residues 293 to 306 (DSDI…DKDG) and 360 to 369 (DKNASRDPNR). 2 disordered regions span residues 293–314 (DSDI…KRIK) and 360–387 (DKNA…ESER). Positions 370–380 (QDANAASSGET) are enriched in polar residues. Residues 423–447 (VHFEKLDLEMERSRKQLEEVRNLLF) adopt a coiled-coil conformation.

In terms of assembly, homodimers and heterodimers. Interacts with SWI3A, SWI3C, SWI3D, BSH, BRM and FCA (via C-terminus), and (via N-terminus) with HAB1. Interacts with MORC6 and SUVH9. Expressed in roots, stems, leaves, flowers and siliques.

The protein localises to the nucleus. Functionally, component of a multiprotein complex equivalent of the SWI/SNF complex, an ATP-dependent chromatin-remodeling complex, which is required for the positive and negative regulation of gene expression of a large number of genes. It changes chromatin structure by altering DNA-histone contacts within a nucleosome, leading eventually to a change in nucleosome position, thus facilitating or repressing binding of gene-specific transcription factors. May play an essential role in the transition from the vegetative to the reproductive phase of development. May be a positive regulator of ABA signaling. The chain is SWI/SNF complex subunit SWI3B (SWI3B) from Arabidopsis thaliana (Mouse-ear cress).